The sequence spans 811 residues: MDNLLVRGLTHKLYDKRKATAYELERVVKGYLENDETEKIRAVISQLANDFVYSPARGPNATFGGLIGLAAVAIALGPKIDSYMESILLPVLYCFNDSDSKIRYYACESMYNIGKVAKGEVFRYFNLIFDVLCKLFADTEITVKNGAELLDRLIKDIVMQQAATYMSSAEDIKNFKEGPVSSSIQDVPVMSTEQPRMHTFSLSELVPLLSERLYVINPNTRMFLVSWIRLLDSIPDLEFISYLPFLLDGLMNYLSDPNESIRIVTSNCLYDFLREIQKIAKVKYHILQRDEESEPDFFDSMVRRNMSDAELKEISDYVESSLRDGSFILEAHIQIDYKRILEIIIDHLGSSVPLIQEKALKWLFEFIYIAPKDVLLQIPKVLENLLPLMSNDENMRQSAKDLSQNLVILVSKIMDIEFSGSETNNKDNSLSVDFRSLIEVLQKLLSNDNEETRLCALEWVLLLQRRTGGKLINMHDPIFQTLLLQLSDPSDLVVSRTLELLAHIAISHKSVNLVPFLKSLLQMFAEDRKFLNSRGNLIIRQLCNYIEGERVYTSFAGILETEENLELASIMVEVLNNNLFTAPELYDLRKKLKQSAPKLQNIFTTLYTAWCHNSIAVFSLCLLSQNYEHAANLLSVFAEIEFNIDMLIQLDKLVQLIESPVFTYMRLQLLEPEKYPYLHKALYGILMLLPQSSAFRTLRDRLQCSSTPRTNTILANERLPRSRRDDPYWTDLLERLKAVQLSHQNNYREPIRATRLALAGALPSTPTATTISTTTSASGITTTASNSRDSFITRLPPTAALSTGARKKPKQ.

HEAT repeat units lie at residues 81 to 119 (DSYM…VAKG), 122 to 160 (FRYF…IVMQ), 240 to 278 (ISYL…EIQK), 334 to 372 (QIDY…IAPK), 375 to 412 (LLQI…LVSK), 431 to 469 (SVDF…RTGG), and 472 to 510 (INMH…SHKS). Low complexity predominate over residues 775 to 785 (TSASGITTTAS). The interval 775 to 811 (TSASGITTTASNSRDSFITRLPPTAALSTGARKKPKQ) is disordered.

Belongs to the VAC14 family. Component of the PI(3,5)P2 regulatory complex, composed of ATG18, FIG4, FAB1, VAC14 and VAC7. VAC14 nucleates the assembly of the complex and serves as a scaffold.

The protein localises to the cytoplasm. It localises to the vacuole membrane. In terms of biological role, the PI(3,5)P2 regulatory complex regulates both the synthesis and turnover of phosphatidylinositol 3,5-bisphosphate (PtdIns(3,5)P2). Regulates the synthesis of PtdIns(3,5)P2 by positive activation of FAB1 and by controlling FIG4 localization. This Schizosaccharomyces pombe (strain 972 / ATCC 24843) (Fission yeast) protein is Protein VAC14 homolog.